Reading from the N-terminus, the 945-residue chain is Translation initiation factor IF-2 (945 aa).

2 disordered regions span residues 52–80 (RSHG…DSSG) and 96–357 (MKRD…FQAP). The span at 153-175 (PEPEPIVEPEPEPEPEPEPEPQP) shows a compositional bias: acidic residues. Composition is skewed to basic and acidic residues over residues 215–283 (DEER…KEAA) and 294–310 (AKTE…RTAR). Positions 445–614 (PRAPVVTVMG…LLQAEVLELT (170 aa)) constitute a tr-type G domain. Positions 454–461 (GHVDHGKT) are G1. 454–461 (GHVDHGKT) is a GTP binding site. The segment at 479–483 (GITQH) is G2. The tract at residues 500 to 503 (DTPG) is G3. Residues 500–504 (DTPGH) and 554–557 (NKID) contribute to the GTP site. A G4 region spans residues 554-557 (NKID). The segment at 590-592 (SAK) is G5.

This sequence belongs to the TRAFAC class translation factor GTPase superfamily. Classic translation factor GTPase family. IF-2 subfamily.

Its subcellular location is the cytoplasm. Its function is as follows. One of the essential components for the initiation of protein synthesis. Protects formylmethionyl-tRNA from spontaneous hydrolysis and promotes its binding to the 30S ribosomal subunits. Also involved in the hydrolysis of GTP during the formation of the 70S ribosomal complex. This Aromatoleum aromaticum (strain DSM 19018 / LMG 30748 / EbN1) (Azoarcus sp. (strain EbN1)) protein is Translation initiation factor IF-2.